A 627-amino-acid chain; its full sequence is 1-deoxy-D-xylulose-5-phosphate synthase (627 aa).

Residues His76 and 117-119 (SHA) contribute to the thiamine diphosphate site. Asp148 contacts Mg(2+). Residues 149 to 150 (GA), Asn178, Phe288, and Glu370 each bind thiamine diphosphate. Asn178 is a Mg(2+) binding site.

Belongs to the transketolase family. DXPS subfamily. As to quaternary structure, homodimer. The cofactor is Mg(2+). It depends on thiamine diphosphate as a cofactor.

The catalysed reaction is D-glyceraldehyde 3-phosphate + pyruvate + H(+) = 1-deoxy-D-xylulose 5-phosphate + CO2. Its pathway is metabolic intermediate biosynthesis; 1-deoxy-D-xylulose 5-phosphate biosynthesis; 1-deoxy-D-xylulose 5-phosphate from D-glyceraldehyde 3-phosphate and pyruvate: step 1/1. Functionally, catalyzes the acyloin condensation reaction between C atoms 2 and 3 of pyruvate and glyceraldehyde 3-phosphate to yield 1-deoxy-D-xylulose-5-phosphate (DXP). The sequence is that of 1-deoxy-D-xylulose-5-phosphate synthase from Cutibacterium acnes (strain DSM 16379 / KPA171202) (Propionibacterium acnes).